A 286-amino-acid polypeptide reads, in one-letter code: ATP synthase gamma chain (286 aa).

The protein belongs to the ATPase gamma chain family. F-type ATPases have 2 components, CF(1) - the catalytic core - and CF(0) - the membrane proton channel. CF(1) has five subunits: alpha(3), beta(3), gamma(1), delta(1), epsilon(1). CF(0) has three main subunits: a, b and c.

Its subcellular location is the cell inner membrane. In terms of biological role, produces ATP from ADP in the presence of a proton gradient across the membrane. The gamma chain is believed to be important in regulating ATPase activity and the flow of protons through the CF(0) complex. The protein is ATP synthase gamma chain of Pseudoalteromonas atlantica (strain T6c / ATCC BAA-1087).